Here is a 718-residue protein sequence, read N- to C-terminus: Phenylalanine--tRNA ligase beta subunit (718 aa).

Positions 39 to 153 (LNEISGIKFG…IFDLESNPLK (115 aa)) constitute a tRNA-binding domain. Positions 386–460 (SKKTFLDLNY…RFYGLEKLKD (75 aa)) constitute a B5 domain. Mg(2+) contacts are provided by Asp438, Asp444, and Asp448.

It belongs to the phenylalanyl-tRNA synthetase beta subunit family. Type 1 subfamily. As to quaternary structure, tetramer of two alpha and two beta subunits. Mg(2+) is required as a cofactor.

It is found in the cytoplasm. The catalysed reaction is tRNA(Phe) + L-phenylalanine + ATP = L-phenylalanyl-tRNA(Phe) + AMP + diphosphate + H(+). The protein is Phenylalanine--tRNA ligase beta subunit of Mesomycoplasma hyopneumoniae (strain J / ATCC 25934 / NCTC 10110) (Mycoplasma hyopneumoniae).